The chain runs to 394 residues: Phosphoglycerate kinase (394 aa).

Residues 21 to 23, R36, 59 to 62, R118, and R151 contribute to the substrate site; these read DFN and HLGR. Position 183 is a phosphoserine (S183). ATP is bound by residues K201 and G292. T299 carries the phosphothreonine modification. Residues E323 and 350–353 each bind ATP; that span reads GGDS.

Belongs to the phosphoglycerate kinase family. As to quaternary structure, monomer.

It localises to the cytoplasm. The enzyme catalyses (2R)-3-phosphoglycerate + ATP = (2R)-3-phospho-glyceroyl phosphate + ADP. It participates in carbohydrate degradation; glycolysis; pyruvate from D-glyceraldehyde 3-phosphate: step 2/5. This is Phosphoglycerate kinase from Bacillus anthracis (strain A0248).